The following is a 1420-amino-acid chain: DNA-directed RNA polymerase subunit beta' (1420 aa).

Zn(2+) is bound by residues cysteine 71, cysteine 73, cysteine 86, and cysteine 89. 3 residues coordinate Mg(2+): aspartate 461, aspartate 463, and aspartate 465. Residues cysteine 815, cysteine 889, cysteine 896, and cysteine 899 each coordinate Zn(2+).

Belongs to the RNA polymerase beta' chain family. The RNAP catalytic core consists of 2 alpha, 1 beta, 1 beta' and 1 omega subunit. When a sigma factor is associated with the core the holoenzyme is formed, which can initiate transcription. The cofactor is Mg(2+). It depends on Zn(2+) as a cofactor.

The catalysed reaction is RNA(n) + a ribonucleoside 5'-triphosphate = RNA(n+1) + diphosphate. DNA-dependent RNA polymerase catalyzes the transcription of DNA into RNA using the four ribonucleoside triphosphates as substrates. The chain is DNA-directed RNA polymerase subunit beta' from Histophilus somni (strain 2336) (Haemophilus somnus).